The sequence spans 98 residues: Large ribosomal subunit protein uL23 (98 aa).

It belongs to the universal ribosomal protein uL23 family. In terms of assembly, part of the 50S ribosomal subunit. Contacts protein L29, and trigger factor when it is bound to the ribosome.

Its function is as follows. One of the early assembly proteins it binds 23S rRNA. One of the proteins that surrounds the polypeptide exit tunnel on the outside of the ribosome. Forms the main docking site for trigger factor binding to the ribosome. The protein is Large ribosomal subunit protein uL23 of Clostridium kluyveri (strain NBRC 12016).